A 64-amino-acid polypeptide reads, in one-letter code: Large ribosomal subunit protein uL29 (64 aa).

The protein belongs to the universal ribosomal protein uL29 family.

This chain is Large ribosomal subunit protein uL29, found in Paraburkholderia phytofirmans (strain DSM 17436 / LMG 22146 / PsJN) (Burkholderia phytofirmans).